A 218-amino-acid chain; its full sequence is Adenylate kinase (218 aa).

10–15 (GAGKGT) contacts ATP. Positions 30 to 59 (STGDMLRAAVKAGTPLGVEAKKIMDAGALV) are NMP. Residues Thr-31, Arg-36, 57-59 (ALV), 85-88 (GFPR), and Gln-92 each bind AMP. Positions 122 to 159 (GRRSHTASGRTYHVKYNPPKVEGKDDVTGEPLIQREDD) are LID. ATP-binding positions include Arg-123 and 132–133 (TY). Residues Arg-156 and Arg-167 each coordinate AMP. Residue Gly-203 coordinates ATP.

It belongs to the adenylate kinase family. In terms of assembly, monomer.

Its subcellular location is the cytoplasm. The enzyme catalyses AMP + ATP = 2 ADP. Its pathway is purine metabolism; AMP biosynthesis via salvage pathway; AMP from ADP: step 1/1. Functionally, catalyzes the reversible transfer of the terminal phosphate group between ATP and AMP. Plays an important role in cellular energy homeostasis and in adenine nucleotide metabolism. This chain is Adenylate kinase, found in Polaromonas sp. (strain JS666 / ATCC BAA-500).